The following is a 418-amino-acid chain: Tyrosine--tRNA ligase (418 aa).

Tyr34 is an L-tyrosine binding site. The 'HIGH' region signature appears at 39–48; that stretch reads PTADSLHLGH. L-tyrosine-binding residues include Tyr169 and Gln173. A 'KMSKS' region motif is present at residues 229 to 233; the sequence is KFGKS. Position 232 (Lys232) interacts with ATP. Positions 352–418 constitute an S4 RNA-binding domain; sequence LNIVELLVNA…GKKKNFVLTY (67 aa).

It belongs to the class-I aminoacyl-tRNA synthetase family. TyrS type 1 subfamily. As to quaternary structure, homodimer.

It localises to the cytoplasm. The enzyme catalyses tRNA(Tyr) + L-tyrosine + ATP = L-tyrosyl-tRNA(Tyr) + AMP + diphosphate + H(+). Functionally, catalyzes the attachment of tyrosine to tRNA(Tyr) in a two-step reaction: tyrosine is first activated by ATP to form Tyr-AMP and then transferred to the acceptor end of tRNA(Tyr). The polypeptide is Tyrosine--tRNA ligase (Streptococcus thermophilus (strain ATCC BAA-491 / LMD-9)).